Here is a 484-residue protein sequence, read N- to C-terminus: Probable peptide/nitrate transporter At3g43790 (484 aa).

12 helical membrane-spanning segments follow: residues 39-59 (FIWL…PYIY), 76-96 (FYAG…SIFW), 107-127 (PIIL…GLST), 129-149 (FWLA…LGVI), 168-188 (VVST…GYLA), 210-230 (FLPS…CWWL), 278-298 (MAII…NEIF), 318-338 (VGEV…LVYP), 355-375 (VLLI…GVTL), 381-401 (CASI…FIML), 416-436 (ISMT…GVLF), and 460-480 (VFLV…IPYI).

The protein belongs to the major facilitator superfamily.

The protein localises to the membrane. The chain is Probable peptide/nitrate transporter At3g43790 (ZIFL2) from Arabidopsis thaliana (Mouse-ear cress).